The sequence spans 52 residues: Rubredoxin-2 (52 aa).

One can recognise a Rubredoxin-like domain in the interval 1-52 (MEQWKCNICGYIYNPETGDPEGDIPAGTSFESLPDSWMCPVCGAGKEEFTKI). 4 residues coordinate Fe cation: cysteine 6, cysteine 9, cysteine 39, and cysteine 42.

This sequence belongs to the rubredoxin family. Monomer. Fe(3+) is required as a cofactor.

In terms of biological role, serves as an electron acceptor for pyruvate ferredoxin oxidoreductase (PFOR). This Chlorobaculum tepidum (strain ATCC 49652 / DSM 12025 / NBRC 103806 / TLS) (Chlorobium tepidum) protein is Rubredoxin-2 (rub2).